The primary structure comprises 245 residues: tRNA1(Val) (adenine(37)-N6)-methyltransferase (245 aa).

It belongs to the methyltransferase superfamily. tRNA (adenine-N(6)-)-methyltransferase family.

Its subcellular location is the cytoplasm. It carries out the reaction adenosine(37) in tRNA1(Val) + S-adenosyl-L-methionine = N(6)-methyladenosine(37) in tRNA1(Val) + S-adenosyl-L-homocysteine + H(+). Functionally, specifically methylates the adenine in position 37 of tRNA(1)(Val) (anticodon cmo5UAC). This chain is tRNA1(Val) (adenine(37)-N6)-methyltransferase, found in Escherichia coli O139:H28 (strain E24377A / ETEC).